A 379-amino-acid polypeptide reads, in one-letter code: Succinyl-diaminopimelate desuccinylase (379 aa).

His70 serves as a coordination point for Zn(2+). Asp72 is a catalytic residue. Asp103 contacts Zn(2+). The active-site Proton acceptor is the Glu137. Zn(2+) contacts are provided by Glu138, Glu166, and His352.

The protein belongs to the peptidase M20A family. DapE subfamily. In terms of assembly, homodimer. The cofactor is Zn(2+). Co(2+) serves as cofactor.

It carries out the reaction N-succinyl-(2S,6S)-2,6-diaminopimelate + H2O = (2S,6S)-2,6-diaminopimelate + succinate. It participates in amino-acid biosynthesis; L-lysine biosynthesis via DAP pathway; LL-2,6-diaminopimelate from (S)-tetrahydrodipicolinate (succinylase route): step 3/3. Functionally, catalyzes the hydrolysis of N-succinyl-L,L-diaminopimelic acid (SDAP), forming succinate and LL-2,6-diaminopimelate (DAP), an intermediate involved in the bacterial biosynthesis of lysine and meso-diaminopimelic acid, an essential component of bacterial cell walls. The protein is Succinyl-diaminopimelate desuccinylase of Shewanella baltica (strain OS223).